The chain runs to 443 residues: Threonine/serine transporter TdcC (443 aa).

11 helical membrane passes run 22–42, 44–64, 97–117, 140–160, 163–183, 207–227, 259–279, 319–339, 366–386, 389–409, and 423–443; these read TTWTLGLFGTAIGAGVLFFPI, AGFGGLIPILLMLVLAYPIAF, GVVITFLYFFAICPLLWIYGV, FVALFLLLLMAFVIWFGKDLM, VMSYLVWPFIASLVLISLSLI, ILVTVWLGISIMVFSFNFSPI, ASMLMVAVVMFFAFSCLFTLS, ASIIALVAIFKSFFGHYLGTL, ISMIFIMGSTWVVAYANPNIL, IEAMGAPIIASLLCLLPMYAI, and DNVFVTLIGLLTILNIVYKLF.

Belongs to the amino acid/polyamine transporter 2 family. SdaC/TdcC subfamily.

The protein resides in the cell inner membrane. The enzyme catalyses L-threonine(in) + H(+)(in) = L-threonine(out) + H(+)(out). It catalyses the reaction L-serine(in) + H(+)(in) = L-serine(out) + H(+)(out). Its function is as follows. Involved in the import of threonine and serine into the cell, with the concomitant import of a proton (symport system). This chain is Threonine/serine transporter TdcC, found in Salmonella newport (strain SL254).